Reading from the N-terminus, the 162-residue chain is Xylulose kinase (162 aa).

The segment at 16–39 (GGHSATPRPATGPAGPAAHSGRHQ) is disordered. Over residues 20 to 33 (ATPRPATGPAGPAA) the composition is skewed to low complexity.

This sequence belongs to the FGGY kinase family.

The enzyme catalyses D-xylulose + ATP = D-xylulose 5-phosphate + ADP + H(+). Its function is as follows. Catalyzes the phosphorylation of D-xylulose to D-xylulose 5-phosphate. This is Xylulose kinase from Actinoplanes sp. (strain ATCC 31351 / 3876) (Ampullariella sp.).